Reading from the N-terminus, the 1820-residue chain is Sodium channel protein (1820 aa).

Over 1–117 (MARKFSSARP…FNPIRRGAIR (117 aa)) the chain is Cytoplasmic. An I repeat occupies 108–410 (FNPIRRGAIR…VAMAYEEQNQ (303 aa)). Residues 118–138 (VFVNSAFNFFIMFTIFSNCIF) form a helical membrane-spanning segment. The Extracellular portion of the chain corresponds to 139–149 (MTISNPPAWSK). Residues 150-171 (IVEYTFTGIYTFEVIVKVLSRG) traverse the membrane as a helical segment. At 172–176 (FCIGH) the chain is on the cytoplasmic side. The chain crosses the membrane as a helical span at residues 177-197 (FTFLRDPWNWLDFSVVTMTYI). At 198–203 (TEFIDL) the chain is on the extracellular side. A helical; Voltage-sensor membrane pass occupies residues 204 to 224 (RNVSALRTFRVLRALKTITIF). At 225 to 243 (PGLKTIVRALIESMKQMGD) the chain is on the cytoplasmic side. The helical transmembrane segment at 244–264 (VVILTVFSLAVFTLAGMQLFM) threads the bilayer. Residues 265–346 (GNLRHKCIRW…PNYGYTNYDN (82 aa)) lie on the Extracellular side of the membrane. Cysteines 271 and 324 form a disulfide. N-linked (GlcNAc...) asparagine glycans are attached at residues Asn278, Asn288, and Asn317. The tract at residues 285-342 (SAYNTTFDFTAYIENEENQYFLDGALDALLCGNNSDAGKCPEGYTCMKAGRNPNYGYT) is non-homologous region of repeat I. The pore-forming intramembrane region spans 347 to 371 (FAWTFLCLFRLMLQDYWENLYQMTL). Residues 372–378 (RAAGKSY) lie on the Extracellular side of the membrane. Residues 379–402 (MVFFIMVIFLGSFYLINLILAVVA) form a helical membrane-spanning segment. At 403-557 (MAYEEQNQAT…CCGPWVFLKK (155 aa)) the chain is on the cytoplasmic side. Positions 483-507 (SVKLSTEEQRSDSKSMDSKHSVDKP) are disordered. Basic and acidic residues predominate over residues 487-507 (STEEQRSDSKSMDSKHSVDKP). One copy of the II repeat lies at 548-811 (CCGPWVFLKK…EEDDEVNSLQ (264 aa)). Residues 558 to 578 (WVHFVMMDPFTDLFITLCIIL) form a helical membrane-spanning segment. Over 579–599 (NTLFMSIEHHPMNESFQSLLS) the chain is Extracellular. Asn591 carries N-linked (GlcNAc...) asparagine glycosylation. The helical transmembrane segment at 600–620 (AGNLVFTTIFAAEMVLKIIAL) threads the bilayer. The Cytoplasmic segment spans residues 621-625 (DPYYY). Residues 626–643 (FQQTWNIFDSIIVSLSLL) traverse the membrane as a helical segment. Residues 644–650 (ELGLSNM) lie on the Extracellular side of the membrane. Residues 651 to 671 (QGMSVLRSLRLLRIFKLAKSW) form a helical; Voltage-sensor membrane-spanning segment. Topologically, residues 672 to 690 (PTLNILIKIICNSVGALGN) are cytoplasmic. Residues 691–711 (LTIVLAIIVFIFALVGFQLFG) traverse the membrane as a helical segment. The Extracellular segment spans residues 712–734 (KNYKEYVCKISDDCELPRWHMND). Positions 735–755 (FFHSFLIVFRALCGEWIETMW) form an intramembrane region, pore-forming. Topologically, residues 756-766 (DCMEVGGVPMC) are extracellular. A disulfide bond links Cys757 and Cys766. The helical transmembrane segment at 767 to 790 (LAVYMMVIIIGNLVMLNLFLALLL) threads the bilayer. At 791–1004 (SSFSSDNLSS…TIVEHDYFET (214 aa)) the chain is on the cytoplasmic side. Disordered stretches follow at residues 844–864 (PPSD…DTLP) and 891–959 (VKGE…SKDP). Acidic residues predominate over residues 896–910 (EIEEEGLVDSSDEED). A compositionally biased stretch (polar residues) spans 924-935 (SVCSTVDYSPSE). A compositionally biased stretch (acidic residues) spans 942-953 (EEEEEEEEEPEE). The stretch at 988–1295 (NLRRTCYTIV…KKYYNAMKKL (308 aa)) is one III repeat. A helical transmembrane segment spans residues 1005-1025 (FIIFMILLSSGVLAFEDIYIW). Topologically, residues 1026 to 1037 (RRRVIKVILEYA) are extracellular. A helical transmembrane segment spans residues 1038–1058 (DKVFTYVFIVEMLLKWVAYGF). Over 1059–1065 (KRYFTDA) the chain is Cytoplasmic. A helical membrane pass occupies residues 1066–1086 (WCWLDFVIVGASIMGITSSLL). The Extracellular segment spans residues 1087-1091 (GYEEL). Residues 1092 to 1112 (GAIKNLRTIRALRPLRALSRF) form a helical; Voltage-sensor membrane-spanning segment. Residues 1113–1131 (EGMKVVVRALLGAIPSIMN) lie on the Cytoplasmic side of the membrane. The helical transmembrane segment at 1132–1152 (VLLVCLMFWLIFSIMGVNLFA) threads the bilayer. Residues 1153 to 1199 (GKFYRCINTTTDEILPVEEVNNRSDCMALMYTNEVRWVNLKVNYDNA) lie on the Extracellular side of the membrane. Asn1160 and Asn1174 each carry an N-linked (GlcNAc...) asparagine glycan. Residues 1172-1194 (VNNRSDCMALMYTNEVRWVNLKV) form a non-homologous region of repeat III region. An intramembrane region (pore-forming) is located at residues 1200-1221 (GMGYLSLLQVSTFKGWMDIMYA). The Extracellular segment spans residues 1222–1243 (AVDSREVEDQPIYEINVYMYLY). The chain crosses the membrane as a helical span at residues 1244–1264 (FVIFIVFGAFFTLNLFIGVII). Over 1265–1320 (DNFNRQKQKLGGEDLFMTEEQKKYYNAMKKLGSKKAAKCIPRPSNVVQGVVYDIVT) the chain is Cytoplasmic. The stretch at 1304–1602 (IPRPSNVVQG…WHKFDVHGTQ (299 aa)) is one IV repeat. Residues 1321-1341 (QPFTDIFIMALICINMVAMMV) form a helical membrane-spanning segment. Residues 1342 to 1352 (ESEDQSQVKKD) lie on the Extracellular side of the membrane. Residues 1353 to 1376 (ILSQINVIFVIIFTVECLLKLLAL) form a helical membrane-spanning segment. Topologically, residues 1377–1380 (RQYF) are cytoplasmic. A helical transmembrane segment spans residues 1381–1398 (FTVGWNVFDFAVVVISII). The Extracellular segment spans residues 1399–1416 (GLLLSDIIEKYFVSPTLF). Residues 1417 to 1437 (RVIRLARIARVLRLIRAAKGI) traverse the membrane as a helical; Voltage-sensor segment. Topologically, residues 1438-1453 (RTLLFALMMSLPALFN) are cytoplasmic. The helical transmembrane segment at 1454–1474 (IGLLLFLIMFIFSIFGMSNFA) threads the bilayer. Topologically, residues 1475 to 1490 (YVKKQGGVDDIFNFET) are extracellular. Positions 1490-1505 (TFGNSMICLFEITTSA) are non-homologous region of repeat IV. The segment at residues 1491–1513 (FGNSMICLFEITTSAGWDGLLLP) is an intramembrane region (pore-forming). At 1514–1543 (TLNTGPPDCDPDVENPGTDVRGNCGNPGKG) the chain is on the extracellular side. A helical membrane pass occupies residues 1544 to 1567 (ITFFCSYIILSFLVVVNMYIAIIL). At 1568-1820 (ENFGVAQEES…GAIVVRESIV (253 aa)) the chain is on the cytoplasmic side.

The protein belongs to the sodium channel (TC 1.A.1.10) family.

It localises to the cell membrane. Its function is as follows. Mediates the voltage-dependent sodium ion permeability of excitable membranes. Assuming opened or closed conformations in response to the voltage difference across the membrane, the protein forms a sodium-selective channel through which Na(+) ions may pass in accordance with their electrochemical gradient. The polypeptide is Sodium channel protein (Electrophorus electricus (Electric eel)).